Consider the following 335-residue polypeptide: MKRIAIDAMGGDNAPKAIVEGVNQAIEAFSDIEIQLYGDQTKINSYLIQSDRVAIIHTDEKIMSDDEPAKAVRRKKKASMVLAAKAVKEGKADAIISAGNTGALLAVGLFVVGRIKGVDRPGLLSTIPTVTGLGFDMLDLGANAENTAKHLHQYAILGSFYAKNVRGIANPRVGLLNNGTEETKGDPLRKATYELLTADNTISFVGNVEARELMSGVADVIVSDGFTGNAVLKSIEGTAISIMGQLKQIINSGGIKTKIGASLLKSSLYEMRKTLDYSSAGGAVLFGLKAPVVKSHGSSDVKAIFSTIKQVRTMLDTNVVGQLVEEFAKETQVND.

The protein belongs to the PlsX family. Homodimer. Probably interacts with PlsY.

The protein resides in the cytoplasm. It catalyses the reaction a fatty acyl-[ACP] + phosphate = an acyl phosphate + holo-[ACP]. Its pathway is lipid metabolism; phospholipid metabolism. In terms of biological role, catalyzes the reversible formation of acyl-phosphate (acyl-PO(4)) from acyl-[acyl-carrier-protein] (acyl-ACP). This enzyme utilizes acyl-ACP as fatty acyl donor, but not acyl-CoA. The polypeptide is Phosphate acyltransferase (Streptococcus pyogenes serotype M28 (strain MGAS6180)).